We begin with the raw amino-acid sequence, 580 residues long: Alpha-thujene synthase TPS3, chloroplastic (580 aa).

A chloroplast-targeting transit peptide spans 1–26 (MALQLLTPSFSFQHSPSPHRLTTLRY). (2E)-geranyl diphosphate contacts are provided by arginine 296, aspartate 333, aspartate 337, arginine 473, and aspartate 476. The Mg(2+) site is built by aspartate 333 and aspartate 337. The DDXXD motif motif lies at 333-337 (DDVYD). Mg(2+)-binding residues include aspartate 476, threonine 480, and glutamate 484.

Belongs to the terpene synthase family. Tpsb subfamily. Monomer. Mg(2+) serves as cofactor. The cofactor is Mn(2+). Mostly expressed in developing and mature fruits, and, to a lower extent, in male leaves. Barely detectable in female leaves and shoots.

The protein resides in the plastid. Its subcellular location is the chloroplast. It carries out the reaction (2E)-geranyl diphosphate = alpha-thujene + diphosphate. The catalysed reaction is (2E)-geranyl diphosphate = (1R,5R)-sabinene + diphosphate. The protein operates within secondary metabolite biosynthesis; terpenoid biosynthesis. Functionally, monoterpene synthase (TPS) involved in the biosynthesis of monoterpene natural products used by traditional Chinese medicine to treat headache, inflammation and intoxication. Catalyzes the conversion of (2E)-geranyl diphosphate (GPP) into alpha-thujene and (1R,5R)-sabinene. In Litsea cubeba (Aromatic litsea), this protein is Alpha-thujene synthase TPS3, chloroplastic.